Here is an 850-residue protein sequence, read N- to C-terminus: DNA polymerase I (850 aa).

The 5'-3' exonuclease domain occupies 1–288 (MKLVIFDGNS…SIIKRLGLSE (288 aa)). The segment at 470–850 (VDRDALIQYT…KEGLNWYETK (381 aa)) is polymerase.

The protein belongs to the DNA polymerase type-A family.

It carries out the reaction DNA(n) + a 2'-deoxyribonucleoside 5'-triphosphate = DNA(n+1) + diphosphate. In addition to polymerase activity, this DNA polymerase exhibits 3'-5' and 5'-3' exonuclease activity. This is DNA polymerase I (polA) from Caldicellulosiruptor bescii (strain ATCC BAA-1888 / DSM 6725 / KCTC 15123 / Z-1320) (Anaerocellum thermophilum).